A 343-amino-acid polypeptide reads, in one-letter code: GTPase Obg (343 aa).

Residues 1 to 159 (MKFLDQAKIY…RWVWLRLKLI (159 aa)) enclose the Obg domain. One can recognise an OBG-type G domain in the interval 160–328 (ADAGLVGLPN…LLRQVMTYVA (169 aa)). GTP is bound by residues 166–173 (GLPNAGKS), 191–195 (FTTLH), 213–216 (DIPG), 280–283 (NKCD), and 309–311 (SGV). Positions 173 and 193 each coordinate Mg(2+).

The protein belongs to the TRAFAC class OBG-HflX-like GTPase superfamily. OBG GTPase family. As to quaternary structure, monomer. Mg(2+) is required as a cofactor.

It is found in the cytoplasm. Functionally, an essential GTPase which binds GTP, GDP and possibly (p)ppGpp with moderate affinity, with high nucleotide exchange rates and a fairly low GTP hydrolysis rate. Plays a role in control of the cell cycle, stress response, ribosome biogenesis and in those bacteria that undergo differentiation, in morphogenesis control. This Granulibacter bethesdensis (strain ATCC BAA-1260 / CGDNIH1) protein is GTPase Obg.